We begin with the raw amino-acid sequence, 299 residues long: MNILLFGKTGQVGWELQRSLAPVGNLIALDVHSKEFCGDFSNPKGVAETVRKLRPDVIVNAAAHTAVDKAESEPELAQLLNATSVEAIAKAANETGAWVVHYSTDYVFPGTGDIPWQETDATSPLNVYGKTKLAGEKALQDNCPKHLIFRTSWVYAGKGNNFAKTMLRLAKERQTLSVINDQYGAPTGAELLADCTAHAIRVALNKPEVAGLYHLVAGGTTTWHDYAALVFDEARKAGITLALTELNAVPTSAYPTPASRPGNSRLNTEKFQRNFDLILPQWELGVKRMLTEMFTTTTI.

Residues 10–12 (GQV), D30, 39–40 (DF), and 63–65 (AHT) contribute to the NADH site. 11 to 12 (QV) is a binding site for NADPH. NADPH-binding positions include 39 to 40 (DF), 63 to 65 (AHT), and Y102. A dTDP-beta-L-rhamnose-binding site is contributed by 104-105 (TD). NADH-binding residues include Y128 and K132. Residues Y128 and K132 each coordinate NADPH. Residue Y128 is the Proton donor/acceptor of the active site. W153 contacts dTDP-beta-L-rhamnose.

Belongs to the dTDP-4-dehydrorhamnose reductase family. In terms of assembly, homodimer. Requires Mg(2+) as cofactor.

It catalyses the reaction dTDP-beta-L-rhamnose + NADP(+) = dTDP-4-dehydro-beta-L-rhamnose + NADPH + H(+). It participates in carbohydrate biosynthesis; dTDP-L-rhamnose biosynthesis. The protein operates within bacterial outer membrane biogenesis; LPS O-antigen biosynthesis. Involved in the biosynthesis of the dTDP-L-rhamnose which is an important component of lipopolysaccharide (LPS). Catalyzes the reduction of dTDP-6-deoxy-L-lyxo-4-hexulose to yield dTDP-L-rhamnose. RmlD uses NADH and NADPH nearly equally well. This is dTDP-4-dehydrorhamnose reductase (rfbD) from Salmonella typhimurium (strain LT2 / SGSC1412 / ATCC 700720).